A 360-amino-acid chain; its full sequence is UDP-N-acetylglucosamine--N-acetylmuramyl-(pentapeptide) pyrophosphoryl-undecaprenol N-acetylglucosamine transferase (360 aa).

Residues threonine 14–glycine 16, asparagine 131, arginine 167, serine 195, isoleucine 249, and glutamine 294 each bind UDP-N-acetyl-alpha-D-glucosamine.

Belongs to the glycosyltransferase 28 family. MurG subfamily.

The protein localises to the cell inner membrane. The enzyme catalyses di-trans,octa-cis-undecaprenyl diphospho-N-acetyl-alpha-D-muramoyl-L-alanyl-D-glutamyl-meso-2,6-diaminopimeloyl-D-alanyl-D-alanine + UDP-N-acetyl-alpha-D-glucosamine = di-trans,octa-cis-undecaprenyl diphospho-[N-acetyl-alpha-D-glucosaminyl-(1-&gt;4)]-N-acetyl-alpha-D-muramoyl-L-alanyl-D-glutamyl-meso-2,6-diaminopimeloyl-D-alanyl-D-alanine + UDP + H(+). It participates in cell wall biogenesis; peptidoglycan biosynthesis. In terms of biological role, cell wall formation. Catalyzes the transfer of a GlcNAc subunit on undecaprenyl-pyrophosphoryl-MurNAc-pentapeptide (lipid intermediate I) to form undecaprenyl-pyrophosphoryl-MurNAc-(pentapeptide)GlcNAc (lipid intermediate II). This is UDP-N-acetylglucosamine--N-acetylmuramyl-(pentapeptide) pyrophosphoryl-undecaprenol N-acetylglucosamine transferase from Polaromonas naphthalenivorans (strain CJ2).